Reading from the N-terminus, the 452-residue chain is UDP-N-acetylmuramoylalanine--D-glutamate ligase (452 aa).

An ATP-binding site is contributed by 119–125 (GSNGKTT).

The protein belongs to the MurCDEF family.

The protein resides in the cytoplasm. The enzyme catalyses UDP-N-acetyl-alpha-D-muramoyl-L-alanine + D-glutamate + ATP = UDP-N-acetyl-alpha-D-muramoyl-L-alanyl-D-glutamate + ADP + phosphate + H(+). It functions in the pathway cell wall biogenesis; peptidoglycan biosynthesis. Its function is as follows. Cell wall formation. Catalyzes the addition of glutamate to the nucleotide precursor UDP-N-acetylmuramoyl-L-alanine (UMA). In Streptococcus pyogenes serotype M28 (strain MGAS6180), this protein is UDP-N-acetylmuramoylalanine--D-glutamate ligase.